The chain runs to 369 residues: 4-hydroxy-3-methylbut-2-en-1-yl diphosphate synthase (flavodoxin) (369 aa).

Residues Cys270, Cys273, Cys305, and Glu312 each contribute to the [4Fe-4S] cluster site.

It belongs to the IspG family. The cofactor is [4Fe-4S] cluster.

It catalyses the reaction (2E)-4-hydroxy-3-methylbut-2-enyl diphosphate + oxidized [flavodoxin] + H2O + 2 H(+) = 2-C-methyl-D-erythritol 2,4-cyclic diphosphate + reduced [flavodoxin]. The protein operates within isoprenoid biosynthesis; isopentenyl diphosphate biosynthesis via DXP pathway; isopentenyl diphosphate from 1-deoxy-D-xylulose 5-phosphate: step 5/6. Its function is as follows. Converts 2C-methyl-D-erythritol 2,4-cyclodiphosphate (ME-2,4cPP) into 1-hydroxy-2-methyl-2-(E)-butenyl 4-diphosphate. In Pseudomonas fluorescens (strain SBW25), this protein is 4-hydroxy-3-methylbut-2-en-1-yl diphosphate synthase (flavodoxin).